We begin with the raw amino-acid sequence, 438 residues long: Adenylosuccinate synthetase (438 aa).

GTP-binding positions include 13-19 and 41-43; these read GDEGKGK and GHT. Catalysis depends on D14, which acts as the Proton acceptor. Mg(2+) is bound by residues D14 and G41. Residues 14 to 17, 39 to 42, T130, R144, Q225, T240, and R312 contribute to the IMP site; these read DEGK and NAGH. The active-site Proton donor is H42. 308–314 provides a ligand contact to substrate; sequence ATTGRQR. GTP contacts are provided by residues R314, 340 to 342, and 422 to 424; these read KLD and STG.

The protein belongs to the adenylosuccinate synthetase family. In terms of assembly, homodimer. It depends on Mg(2+) as a cofactor.

Its subcellular location is the cytoplasm. It catalyses the reaction IMP + L-aspartate + GTP = N(6)-(1,2-dicarboxyethyl)-AMP + GDP + phosphate + 2 H(+). It participates in purine metabolism; AMP biosynthesis via de novo pathway; AMP from IMP: step 1/2. Its function is as follows. Plays an important role in the de novo pathway of purine nucleotide biosynthesis. Catalyzes the first committed step in the biosynthesis of AMP from IMP. The polypeptide is Adenylosuccinate synthetase (Vesicomyosocius okutanii subsp. Calyptogena okutanii (strain HA)).